We begin with the raw amino-acid sequence, 294 residues long: ATP synthase gamma chain (294 aa).

It belongs to the ATPase gamma chain family. In terms of assembly, F-type ATPases have 2 components, CF(1) - the catalytic core - and CF(0) - the membrane proton channel. CF(1) has five subunits: alpha(3), beta(3), gamma(1), delta(1), epsilon(1). CF(0) has three main subunits: a, b and c.

Its subcellular location is the cell inner membrane. In terms of biological role, produces ATP from ADP in the presence of a proton gradient across the membrane. The gamma chain is believed to be important in regulating ATPase activity and the flow of protons through the CF(0) complex. The chain is ATP synthase gamma chain from Nitrosomonas eutropha (strain DSM 101675 / C91 / Nm57).